A 253-amino-acid chain; its full sequence is Indole-3-glycerol phosphate synthase (253 aa).

This sequence belongs to the TrpC family.

The catalysed reaction is 1-(2-carboxyphenylamino)-1-deoxy-D-ribulose 5-phosphate + H(+) = (1S,2R)-1-C-(indol-3-yl)glycerol 3-phosphate + CO2 + H2O. It functions in the pathway amino-acid biosynthesis; L-tryptophan biosynthesis; L-tryptophan from chorismate: step 4/5. The sequence is that of Indole-3-glycerol phosphate synthase from Bacillus anthracis (strain A0248).